Consider the following 81-residue polypeptide: Photosystem I iron-sulfur center (81 aa).

2 4Fe-4S ferredoxin-type domains span residues 2–31 (SHTV…MIPW) and 39–68 (IASS…VRVY). Residues cysteine 11, cysteine 14, cysteine 17, cysteine 21, cysteine 48, cysteine 51, cysteine 54, and cysteine 58 each coordinate [4Fe-4S] cluster.

In terms of assembly, the eukaryotic PSI reaction center is composed of at least 11 subunits. It depends on [4Fe-4S] cluster as a cofactor.

It localises to the plastid. It is found in the chloroplast thylakoid membrane. The catalysed reaction is reduced [plastocyanin] + hnu + oxidized [2Fe-2S]-[ferredoxin] = oxidized [plastocyanin] + reduced [2Fe-2S]-[ferredoxin]. Its function is as follows. Apoprotein for the two 4Fe-4S centers FA and FB of photosystem I (PSI); essential for photochemical activity. FB is the terminal electron acceptor of PSI, donating electrons to ferredoxin. The C-terminus interacts with PsaA/B/D and helps assemble the protein into the PSI complex. Required for binding of PsaD and PsaE to PSI. PSI is a plastocyanin-ferredoxin oxidoreductase, converting photonic excitation into a charge separation, which transfers an electron from the donor P700 chlorophyll pair to the spectroscopically characterized acceptors A0, A1, FX, FA and FB in turn. The sequence is that of Photosystem I iron-sulfur center from Chaetosphaeridium globosum (Charophycean green alga).